The primary structure comprises 274 residues: Diaminopimelate epimerase (274 aa).

N11, Q44, and N64 together coordinate substrate. C73 acts as the Proton donor in catalysis. Substrate is bound by residues 74–75, N157, N190, and 208–209; these read GN and ER. Catalysis depends on C217, which acts as the Proton acceptor. Substrate is bound at residue 218-219; the sequence is GS.

This sequence belongs to the diaminopimelate epimerase family. As to quaternary structure, homodimer.

Its subcellular location is the cytoplasm. The enzyme catalyses (2S,6S)-2,6-diaminopimelate = meso-2,6-diaminopimelate. Its pathway is amino-acid biosynthesis; L-lysine biosynthesis via DAP pathway; DL-2,6-diaminopimelate from LL-2,6-diaminopimelate: step 1/1. In terms of biological role, catalyzes the stereoinversion of LL-2,6-diaminopimelate (L,L-DAP) to meso-diaminopimelate (meso-DAP), a precursor of L-lysine and an essential component of the bacterial peptidoglycan. This is Diaminopimelate epimerase from Haemophilus influenzae (strain PittEE).